Reading from the N-terminus, the 589-residue chain is NADP-dependent malic enzyme (589 aa).

Y137 acts as the Proton donor in catalysis. Residue R190 participates in NAD(+) binding. The Proton acceptor role is filled by K208. E280, D281, and D304 together coordinate a divalent metal cation. D304 is a binding site for NAD(+). 333 to 349 (LFLGAGEAGTGIAELIA) contacts NADP(+). N445 contacts NAD(+).

It belongs to the malic enzymes family. Homotetramer. Requires Mg(2+) as cofactor. The cofactor is Mn(2+).

The protein resides in the cytoplasm. It catalyses the reaction (S)-malate + NADP(+) = pyruvate + CO2 + NADPH. The enzyme catalyses oxaloacetate + H(+) = pyruvate + CO2. In Phaseolus vulgaris (Kidney bean), this protein is NADP-dependent malic enzyme (ME1).